The sequence spans 195 residues: CD70 antigen (195 aa).

Residues 1-23 (MPEEGRPCPWVRWSGTAFQRQWP) lie on the Cytoplasmic side of the membrane. The chain crosses the membrane as a helical; Signal-anchor for type II membrane protein span at residues 24–44 (WLLLVVFITVFCCWFHCSGLL). The Extracellular segment spans residues 45 to 195 (SKQQQRLLEH…TFFGVQWICP (151 aa)). Positions 58-193 (HTAELQLNLT…DETFFGVQWI (136 aa)) constitute a THD domain. N-linked (GlcNAc...) asparagine glycans are attached at residues Asn65 and Asn116. Disulfide bonds link Cys117-Cys153 and Cys135-Cys170. The N-linked (GlcNAc...) asparagine glycan is linked to Asn172.

The protein belongs to the tumor necrosis factor family. Homotrimer. N-glycosylated. In terms of tissue distribution, very low level of expression. Detected in splenocytes and thymocytes.

The protein localises to the cell membrane. Functionally, expressed at the plasma membrane of B cells, it is the ligand of the CD27 receptor which is specifically expressed at the surface of T cells. The CD70-CD27 signaling pathway mediates antigen-specific T cell activation and expansion which in turn provides immune surveillance of B cells. The chain is CD70 antigen from Mus musculus (Mouse).